Reading from the N-terminus, the 364-residue chain is Phosphoserine aminotransferase (364 aa).

Arg41 is an L-glutamate binding site. Residues 75-76 (AS), Trp100, Thr155, Asp175, and Gln198 each bind pyridoxal 5'-phosphate. Lys199 is modified (N6-(pyridoxal phosphate)lysine). 239 to 240 (NT) serves as a coordination point for pyridoxal 5'-phosphate.

Belongs to the class-V pyridoxal-phosphate-dependent aminotransferase family. SerC subfamily. As to quaternary structure, homodimer. It depends on pyridoxal 5'-phosphate as a cofactor.

Its subcellular location is the cytoplasm. It carries out the reaction O-phospho-L-serine + 2-oxoglutarate = 3-phosphooxypyruvate + L-glutamate. The enzyme catalyses 4-(phosphooxy)-L-threonine + 2-oxoglutarate = (R)-3-hydroxy-2-oxo-4-phosphooxybutanoate + L-glutamate. It participates in amino-acid biosynthesis; L-serine biosynthesis; L-serine from 3-phospho-D-glycerate: step 2/3. Catalyzes the reversible conversion of 3-phosphohydroxypyruvate to phosphoserine and of 3-hydroxy-2-oxo-4-phosphonooxybutanoate to phosphohydroxythreonine. This is Phosphoserine aminotransferase from Streptococcus uberis (strain ATCC BAA-854 / 0140J).